A 352-amino-acid chain; its full sequence is 4-hydroxy-3-methylbut-2-en-1-yl diphosphate synthase (flavodoxin) (352 aa).

Residues C262, C265, C297, and E304 each coordinate [4Fe-4S] cluster.

This sequence belongs to the IspG family. Requires [4Fe-4S] cluster as cofactor.

The catalysed reaction is (2E)-4-hydroxy-3-methylbut-2-enyl diphosphate + oxidized [flavodoxin] + H2O + 2 H(+) = 2-C-methyl-D-erythritol 2,4-cyclic diphosphate + reduced [flavodoxin]. The protein operates within isoprenoid biosynthesis; isopentenyl diphosphate biosynthesis via DXP pathway; isopentenyl diphosphate from 1-deoxy-D-xylulose 5-phosphate: step 5/6. Functionally, converts 2C-methyl-D-erythritol 2,4-cyclodiphosphate (ME-2,4cPP) into 1-hydroxy-2-methyl-2-(E)-butenyl 4-diphosphate. The chain is 4-hydroxy-3-methylbut-2-en-1-yl diphosphate synthase (flavodoxin) from Campylobacter concisus (strain 13826).